A 155-amino-acid polypeptide reads, in one-letter code: Small ribosomal subunit protein uS17 (155 aa).

Alanine 2 carries the post-translational modification N-acetylalanine.

This sequence belongs to the universal ribosomal protein uS17 family.

This Drosophila pseudoobscura pseudoobscura (Fruit fly) protein is Small ribosomal subunit protein uS17.